Reading from the N-terminus, the 471-residue chain is Metal tolerance protein C1 (471 aa).

At 1–78 the chain is on the cytoplasmic side; that stretch reads MGIIRFQILN…PGEEGEKIFR (78 aa). A helical transmembrane segment spans residues 79 to 99; sequence LGLTADIGLSVAKALTGYLCG. At 100 to 101 the chain is on the vacuolar side; it reads ST. The chain crosses the membrane as a helical span at residues 102-122; that stretch reads AIIADAAHSVSDVVLSGVALV. The Cytoplasmic segment spans residues 123-144; sequence SYRAANVPKDKEHPYGHGKFET. A helical transmembrane segment spans residues 145–165; the sequence is LGALGISAMLLATGSGIAWHA. At 166–192 the chain is on the vacuolar side; sequence LDLLSIALSAAPEVIHSGHHHGIDMNH. Residues 193-213 form a helical membrane-spanning segment; the sequence is PILALTVTIASISIKEGLYWI. The Cytoplasmic portion of the chain corresponds to 214–236; the sequence is TKRAGEKQGSGLMMANAWHHRSD. Residues 237-257 form a helical membrane-spanning segment; sequence AISSLVALVGVGGSILGVNFL. At 258–423 the chain is on the vacuolar side; that stretch reads DPLAGLVVST…RITPHLLHSK (166 aa). A helical membrane pass occupies residues 424 to 444; the sequence is ILLQIVVAMPSTMSIQDVMIA. Over 445–471 the chain is Cytoplasmic; that stretch reads AEHAEKEILKAAPNVARVSIQLSLNSE.

Belongs to the cation diffusion facilitator (CDF) transporter (TC 2.A.4) family.

It localises to the vacuole membrane. Involved in sequestration of excess metal in the cytoplasm into vacuoles to maintain metal homeostasis. This is Metal tolerance protein C1 (MTPC1) from Arabidopsis thaliana (Mouse-ear cress).